The following is a 328-amino-acid chain: Cytochrome c biogenesis protein CcsA (328 aa).

8 consecutive transmembrane segments (helical) span residues 13–33 (ISFS…LVNL), 46–66 (GIII…IYSG), 73–93 (LYES…VSYF), 101–121 (LNAI…SGLL), 146–166 (MILG…LLVI), 234–254 (IISL…VWAN), 263–283 (WDPK…YLHI), and 295–315 (AIVA…VNLL).

The protein belongs to the CcmF/CycK/Ccl1/NrfE/CcsA family. May interact with Ccs1.

It localises to the plastid. The protein localises to the chloroplast thylakoid membrane. In terms of biological role, required during biogenesis of c-type cytochromes (cytochrome c6 and cytochrome f) at the step of heme attachment. The chain is Cytochrome c biogenesis protein CcsA from Capsella bursa-pastoris (Shepherd's purse).